The primary structure comprises 761 residues: Protein transport protein SEC23 C (761 aa).

Zn(2+) is bound by residues C60, C63, C82, and C85. The zinc finger-like stretch occupies residues 60 to 85; that stretch reads CRTCRSVLNPYSVVDFSACNWGCPFC.

It belongs to the SEC23/SEC24 family. SEC24 subfamily. Component of the coat protein complex II (COPII), composed of at least five proteins: the Sec23/24 complex, the Sec13/31 complex and Sar1.

The protein resides in the cytoplasmic vesicle. The protein localises to the COPII-coated vesicle membrane. Its subcellular location is the endoplasmic reticulum membrane. It localises to the membrane. Its function is as follows. Component of the coat protein complex II (COPII) which promotes the formation of transport vesicles from the endoplasmic reticulum (ER). The coat has two main functions, the physical deformation of the endoplasmic reticulum membrane into vesicles and the selection of cargo molecules. The polypeptide is Protein transport protein SEC23 C (Arabidopsis thaliana (Mouse-ear cress)).